Reading from the N-terminus, the 516-residue chain is Glycosyl hydrolase family 109 protein 4 (516 aa).

The signal sequence occupies residues 1-18 (MKKIKLLLVAGACVVLSA). Cys19 is lipidated: N-palmitoyl cysteine. Cys19 carries S-diacylglycerol cysteine lipidation. NAD(+) is bound by residues 76–77 (MR), Asp98, 146–149 (WLHH), 166–167 (EV), and Asn195. Residues Tyr224, Arg247, 259–262 (YATH), and Tyr337 contribute to the substrate site. Tyr259 contacts NAD(+).

Belongs to the Gfo/Idh/MocA family. Glycosyl hydrolase 109 subfamily. NAD(+) serves as cofactor.

Its subcellular location is the cell membrane. In terms of biological role, glycosidase. This chain is Glycosyl hydrolase family 109 protein 4, found in Phocaeicola vulgatus (strain ATCC 8482 / DSM 1447 / JCM 5826 / CCUG 4940 / NBRC 14291 / NCTC 11154) (Bacteroides vulgatus).